A 172-amino-acid chain; its full sequence is Adenine phosphoribosyltransferase (172 aa).

The protein belongs to the purine/pyrimidine phosphoribosyltransferase family. As to quaternary structure, homodimer.

It localises to the cytoplasm. The enzyme catalyses AMP + diphosphate = 5-phospho-alpha-D-ribose 1-diphosphate + adenine. Its pathway is purine metabolism; AMP biosynthesis via salvage pathway; AMP from adenine: step 1/1. Catalyzes a salvage reaction resulting in the formation of AMP, that is energically less costly than de novo synthesis. This chain is Adenine phosphoribosyltransferase, found in Prochlorococcus marinus (strain MIT 9211).